The following is a 666-amino-acid chain: Endogenous retrovirus group K member 10 Gag polyprotein (666 aa).

G2 is lipidated: N-myristoyl glycine. The disordered stretch occupies residues 164 to 183 (EGKGPELMGPSESKPRGTSP). CCHC-type zinc fingers lie at residues 544–561 (GKCYNCGQIGHLKKNCPV) and 580–597 (DLCPRCKKGKHWASQCRS). Residues 598-642 (KFDKNGQPLSGNEQRGQPQAPQQTGAFPIQPFVPQGFQGQQPPLS) are disordered. A compositionally biased stretch (polar residues) spans 604–622 (QPLSGNEQRGQPQAPQQTG). The segment covering 624-640 (FPIQPFVPQGFQGQQPP) has biased composition (low complexity).

This sequence belongs to the beta type-B retroviral Gag protein family. HERV class-II K(HML-2) gag subfamily. In terms of processing, myristoylation is essential for retroviral assembly. Alteration of the glycine residue leads to a block in the budding of particles and an accumulation of Gag inside the cell. Specific enzymatic cleavages may yield mature proteins.

The protein localises to the cell membrane. The products of the Gag polyproteins of infectious retroviruses perform highly complex orchestrated tasks during the assembly, budding, maturation, and infection stages of the viral replication cycle. During viral assembly, the proteins form membrane associations and self-associations that ultimately result in budding of an immature virion from the infected cell. Gag precursors also function during viral assembly to selectively bind and package two plus strands of genomic RNA. Endogenous Gag proteins may have kept, lost or modified their original function during evolution. The polypeptide is Endogenous retrovirus group K member 10 Gag polyprotein (ERVK-10) (Homo sapiens (Human)).